The chain runs to 476 residues: Bifunctional protein GlmU (476 aa).

The segment at 1-235 (MTALDIIIMA…ALQVAGVNSP (235 aa)) is pyrophosphorylase. UDP-N-acetyl-alpha-D-glucosamine is bound by residues Lys-23, Gln-81, 86-87 (GT), 108-110 (SGD), Gly-145, Glu-160, and Asn-233. Mg(2+) is bound at residue Asp-110. Asn-233 serves as a coordination point for Mg(2+). A linker region spans residues 236-256 (AQLADLERAHQRAQAAALMEQ). An N-acetyltransferase region spans residues 257-476 (GVRLADPARF…WKRPAKQAKG (220 aa)). Residues Arg-351 and Lys-369 each coordinate UDP-N-acetyl-alpha-D-glucosamine. His-381 acts as the Proton acceptor in catalysis. Residues Tyr-384 and Asn-395 each coordinate UDP-N-acetyl-alpha-D-glucosamine. Residues Ala-398, 404 to 405 (NY), Ser-423, Gly-441, and Arg-458 contribute to the acetyl-CoA site.

In the N-terminal section; belongs to the N-acetylglucosamine-1-phosphate uridyltransferase family. This sequence in the C-terminal section; belongs to the transferase hexapeptide repeat family. Homotrimer. Requires Mg(2+) as cofactor.

It is found in the cytoplasm. It catalyses the reaction alpha-D-glucosamine 1-phosphate + acetyl-CoA = N-acetyl-alpha-D-glucosamine 1-phosphate + CoA + H(+). The catalysed reaction is N-acetyl-alpha-D-glucosamine 1-phosphate + UTP + H(+) = UDP-N-acetyl-alpha-D-glucosamine + diphosphate. It participates in nucleotide-sugar biosynthesis; UDP-N-acetyl-alpha-D-glucosamine biosynthesis; N-acetyl-alpha-D-glucosamine 1-phosphate from alpha-D-glucosamine 6-phosphate (route II): step 2/2. The protein operates within nucleotide-sugar biosynthesis; UDP-N-acetyl-alpha-D-glucosamine biosynthesis; UDP-N-acetyl-alpha-D-glucosamine from N-acetyl-alpha-D-glucosamine 1-phosphate: step 1/1. It functions in the pathway bacterial outer membrane biogenesis; LPS lipid A biosynthesis. Catalyzes the last two sequential reactions in the de novo biosynthetic pathway for UDP-N-acetylglucosamine (UDP-GlcNAc). The C-terminal domain catalyzes the transfer of acetyl group from acetyl coenzyme A to glucosamine-1-phosphate (GlcN-1-P) to produce N-acetylglucosamine-1-phosphate (GlcNAc-1-P), which is converted into UDP-GlcNAc by the transfer of uridine 5-monophosphate (from uridine 5-triphosphate), a reaction catalyzed by the N-terminal domain. The chain is Bifunctional protein GlmU from Acidovorax sp. (strain JS42).